We begin with the raw amino-acid sequence, 456 residues long: uncharacterized protein (456 aa).

In terms of domain architecture, TRAM spans 3–61 (TIKKNEVKTGKVIDLTHEGHGVVKVDRYPIFIPNALIDEEIKFKLIKVKKNFAIGKLIE). [4Fe-4S] cluster is bound by residues Cys74, Cys80, Cys83, and Cys162. Positions 286, 315, 336, and 384 each coordinate S-adenosyl-L-methionine. Cys411 acts as the Nucleophile in catalysis.

It belongs to the class I-like SAM-binding methyltransferase superfamily. RNA M5U methyltransferase family.

This is an uncharacterized protein from Staphylococcus epidermidis (strain ATCC 35984 / DSM 28319 / BCRC 17069 / CCUG 31568 / BM 3577 / RP62A).